Reading from the N-terminus, the 240-residue chain is MPVGTEAIRKVDFLAGTGNRFVAEGKRQLFGEVGIDLFAGPTESLVLADETADPFTVATDLISQAGHGPDTPAVLITTCPKVGRETIEIVNKLLSATDLSTPDVAKVSWDAFGEVIIVDTLKELWELGDHYASEQVQVFTKDPRDALDKMSNYGALFLGENTCVSYGDKVIGKNHVLLTRTTARYTGGLWVGKYLKTCTYQEVTSPESSGKLGRLCGRAARPERFEAHARSGDLQANRHM.

The Zn(2+) site is built by Gln-64 and His-67. Glu-134 serves as the catalytic Proton acceptor. Residues Asp-168 and His-228 each coordinate Zn(2+).

This sequence belongs to the histidinol dehydrogenase family. Requires Zn(2+) as cofactor.

The protein operates within secondary metabolite biosynthesis. Its function is as follows. Histidinol dehydrogenase homolog; part of the gene cluster that mediates the biosynthesis of oryzines, natural products with an unusual maleidride backbone. The two subunits of the fungal fatty acid synthase oryfasA and oryfasB probably form octenoic acid. This fatty acid is most likely activated by the acyl-CoA ligase oryP to give octenyl-CoA before the citrate synthase-like protein oryE catalyzes condensation with oxaloacetate to form tricarboxylic acid. The next steps of the pathways are conjectural, but a favorite possible route has been proposed, beginning with decarboxylation and concomitant dehydration by the decarboxylase oryM, followed by tautomerization, which may lead to the production of a diene intermediate. Reduction of this diene intermediate could give the known metabolite piliformic acid. On the pathway to oryzine B and oryzine A, however, hydroxylation of the diene by the alpha-ketoglutarate-dependent dioxygenase oryG and lactonisation by the lactonohydrolases oryH or oryL could give oryzine B directly. Finally, enoyl reduction by the dehydrogenase oryD would then convert oryzine B into oryzine A. In Aspergillus oryzae (strain ATCC 42149 / RIB 40) (Yellow koji mold), this protein is Histidinol dehydrogenase homolog oryD.